The chain runs to 538 residues: Frizzled-4 (538 aa).

An N-terminal signal peptide occupies residues 1-37 (MAWQGTGPSVRGMPGGVRLRLGLLLLQLLLLQRPALG). The Extracellular portion of the chain corresponds to 38-213 (FGDEEERRCD…KCGYDAGLYS (176 aa)). The region spanning 41 to 162 (EEERRCDPIR…NDHNHMCMEG (122 aa)) is the FZ domain. 8 disulfide bridges follow: Cys46-Cys107, Cys54-Cys100, Cys91-Cys129, Cys118-Cys159, Cys122-Cys146, Cys182-Cys201, Cys205-Cys283, and Cys303-Cys378. Asn60 carries N-linked (GlcNAc...) asparagine glycosylation. The N-linked (GlcNAc...) asparagine glycan is linked to Asn145. The chain crosses the membrane as a helical span at residues 214–244 (RSAKEFTDIWMAVWASLCFISTTFTVLTFLI). Over 245-250 (DSSRFS) the chain is Cytoplasmic. Residues 251–276 (YPERPIIFLSMCYNIYSIAYIVRLTV) traverse the membrane as a helical segment. Residues 277-300 (GRERISCDFEEAAEPVLIQEGLKN) lie on the Extracellular side of the membrane. Residues 301–334 (TGCAIIFLLMYFFGMASSIWWVILTLTWFLAAGL) form a helical membrane-spanning segment. Over 335 to 337 (KWG) the chain is Cytoplasmic. A helical membrane pass occupies residues 338 to 366 (HEAIEMHSSYFHIAAWAIPAVKTIVILIM). Over 367–384 (RLVDADELTGLCYVGNQS) the chain is Extracellular. Residue Asn382 is glycosylated (N-linked (GlcNAc...) asparagine). A helical transmembrane segment spans residues 385–419 (LDALTGFVVAPLFTYLVIGTLFIAAGLVALFKIRS). At 420–432 (NLQKDGTKTDKLE) the chain is on the cytoplasmic side. Residues 433 to 461 (RLMVKIGVFSVLYTVPATCVIACYFYEIS) traverse the membrane as a helical segment. Over 462-474 (NWALFRYSADDSN) the chain is Extracellular. The helical transmembrane segment at 475 to 496 (MAVEMLKIFMSLLVGITSGMWI) threads the bilayer. Over 497–538 (WSAKTLHTWQKCSNRLVNSGKVKREKRGNGWVKPGKGNETVV) the chain is Cytoplasmic. The Lys-Thr-X-X-X-Trp motif, mediates interaction with the PDZ domain of Dvl family members signature appears at 500–505 (KTLHTW). The PDZ-binding signature appears at 536 to 538 (TVV).

This sequence belongs to the G-protein coupled receptor Fz/Smo family. In terms of assembly, interacts with MAGI3 and NDP. Component of a complex, at least composed of TSPAN12, FZD4 and norrin (NDP). Interacts (via FZ domain) with TSKU; TSKU competes with WNT2B for binding to FZD4, inhibiting Wnt signaling and repressing peripheral eye development. Interacts with glypican GPC3. Ubiquitinated by ZNRF3, leading to its degradation by the proteasome.

The protein resides in the cell membrane. Receptor for Wnt proteins. Most of frizzled receptors are coupled to the beta-catenin (CTNNB1) canonical signaling pathway, which leads to the activation of disheveled proteins, inhibition of GSK-3 kinase, nuclear accumulation of beta-catenin (CTNNB1) and activation of Wnt target genes. Plays a critical role in retinal vascularization by acting as a receptor for Wnt proteins and norrin (NDP). In retina, it can be both activated by Wnt protein-binding, but also by a Wnt-independent signaling via binding of norrin (NDP), promoting in both cases beta-catenin (CTNNB1) accumulation and stimulation of LEF/TCF-mediated transcriptional programs. A second signaling pathway involving PKC and calcium fluxes has been seen for some family members, but it is not yet clear if it represents a distinct pathway or if it can be integrated in the canonical pathway, as PKC seems to be required for Wnt-mediated inactivation of GSK-3 kinase. Both pathways seem to involve interactions with G-proteins. May be involved in transduction and intercellular transmission of polarity information during tissue morphogenesis and/or in differentiated tissues. This is Frizzled-4 (Fzd4) from Rattus norvegicus (Rat).